We begin with the raw amino-acid sequence, 213 residues long: Protein brother (213 aa).

The tract at residues 189–213 (HTPQTPPEDHHHRGGPGLPRGPMGW) is disordered. The span at 203–213 (GPGLPRGPMGW) shows a compositional bias: gly residues.

This sequence belongs to the CBF-beta family.

The protein resides in the nucleus. Regulates the DNA-binding properties of Runt. The polypeptide is Protein brother (Bro) (Drosophila melanogaster (Fruit fly)).